The sequence spans 115 residues: Large ribosomal subunit protein bL20 (115 aa).

It belongs to the bacterial ribosomal protein bL20 family.

Its function is as follows. Binds directly to 23S ribosomal RNA and is necessary for the in vitro assembly process of the 50S ribosomal subunit. It is not involved in the protein synthesizing functions of that subunit. This chain is Large ribosomal subunit protein bL20, found in Prochlorococcus marinus (strain SARG / CCMP1375 / SS120).